The sequence spans 555 residues: Glutamine--tRNA ligase (555 aa).

The 'HIGH' region motif lies at 34-44 (PEPNGYLHIGH). Residues 35-37 (EPN) and 41-47 (HIGHAKS) each bind ATP. Residues aspartate 67 and tyrosine 212 each contribute to the L-glutamine site. Residues threonine 231, 261-262 (RL), and 269-271 (MSK) each bind ATP. The 'KMSKS' region motif lies at 268–272 (VMSKR). The tract at residues 317–324 (TKQDNTIE) is interaction with tRNA.

Belongs to the class-I aminoacyl-tRNA synthetase family. As to quaternary structure, monomer.

The protein resides in the cytoplasm. The catalysed reaction is tRNA(Gln) + L-glutamine + ATP = L-glutaminyl-tRNA(Gln) + AMP + diphosphate. This chain is Glutamine--tRNA ligase, found in Salmonella paratyphi B (strain ATCC BAA-1250 / SPB7).